Consider the following 519-residue polypeptide: Histidine--tRNA ligase (519 aa).

It belongs to the class-II aminoacyl-tRNA synthetase family. In terms of assembly, homodimer.

It is found in the cytoplasm. It carries out the reaction tRNA(His) + L-histidine + ATP = L-histidyl-tRNA(His) + AMP + diphosphate + H(+). This chain is Histidine--tRNA ligase, found in Rhodopseudomonas palustris (strain BisB18).